The sequence spans 552 residues: Serine palmitoyltransferase 3 (552 aa).

A disordered region spans residues 1–29; sequence MANPGGGAVCNGKLHNHKKQSNGSQSRNC. A helical membrane pass occupies residues 59-79; it reads PLHVMVFTYMGYGIGTLFGYL. Lysine 371 bears the N6-(pyridoxal phosphate)lysine mark.

The protein belongs to the class-II pyridoxal-phosphate-dependent aminotransferase family. As to quaternary structure, component of the serine palmitoyltransferase (SPT) complex, which is composed of SPTLC1, SPTLC2 or SPTLC3 and SPTSSA or SPTSSB. The heterodimer consisting of SPTLC1 and SPTLC2/SPTLC3 forms the catalytic core of the enzyme, while SPTSSA or SPTSSB subunits determine substrate specificity. SPT also interacts with ORMDL proteins, especially ORMDL3, which negatively regulate SPT activity in the presence of ceramides. The cofactor is pyridoxal 5'-phosphate. Expressed in most tissues, except peripheral blood cells and bone marrow, with highest levels in heart, kidney, liver, uterus and skin.

The protein localises to the endoplasmic reticulum membrane. The catalysed reaction is L-serine + hexadecanoyl-CoA + H(+) = 3-oxosphinganine + CO2 + CoA. The enzyme catalyses dodecanoyl-CoA + L-serine + H(+) = 3-oxotetradecasphinganine + CO2 + CoA. It carries out the reaction tetradecanoyl-CoA + L-serine + H(+) = 3-oxohexadecasphinganine + CO2 + CoA. It catalyses the reaction octadecanoyl-CoA + L-serine + H(+) = 3-oxoeicosasphinganine + CO2 + CoA. Its pathway is lipid metabolism; sphingolipid metabolism. Its activity is regulated as follows. SPT complex catalytic activity is negatively regulated by ORMDL proteins, including ORMDL3, in the presence of ceramides. This mechanism allows to maintain ceramide levels at sufficient concentrations for the production of complex sphingolipids, but which prevents the accumulation of ceramides to levels that trigger apoptosis. Its function is as follows. Component of the serine palmitoyltransferase multisubunit enzyme (SPT) that catalyzes the initial and rate-limiting step in sphingolipid biosynthesis by condensing L-serine and activated acyl-CoA (most commonly palmitoyl-CoA) to form long-chain bases. The SPT complex is composed of SPTLC1, SPTLC2 or SPTLC3 and SPTSSA or SPTSSB. Within this complex, the heterodimer consisting of SPTLC1 and SPTLC2/SPTLC3 forms the catalytic core. The composition of the serine palmitoyltransferase (SPT) complex determines the substrate preference. The SPTLC1-SPTLC2-SPTSSA complex shows a strong preference for C16-CoA substrate, while the SPTLC1-SPTLC3-SPTSSA isozyme uses both C14-CoA and C16-CoA as substrates, with a slight preference for C14-CoA. The SPTLC1-SPTLC2-SPTSSB complex shows a strong preference for C18-CoA substrate, while the SPTLC1-SPTLC3-SPTSSB isozyme displays an ability to use a broader range of acyl-CoAs, without apparent preference. The protein is Serine palmitoyltransferase 3 of Homo sapiens (Human).